The following is a 322-amino-acid chain: tRNA-modifying protein YgfZ (322 aa).

Folate is bound at residue W182.

Belongs to the tRNA-modifying YgfZ family.

The protein resides in the cytoplasm. Functionally, folate-binding protein involved in regulating the level of ATP-DnaA and in the modification of some tRNAs. It is probably a key factor in regulatory networks that act via tRNA modification, such as initiation of chromosomal replication. The sequence is that of tRNA-modifying protein YgfZ from Vibrio parahaemolyticus serotype O3:K6 (strain RIMD 2210633).